Consider the following 240-residue polypeptide: UDP-2,3-diacylglucosamine hydrolase (240 aa).

D8, H10, D41, N78, and H113 together coordinate Mn(2+). N78–R79 contributes to the substrate binding site. Substrate contacts are provided by D121, S159, N163, K166, and H194. Mn(2+)-binding residues include H194 and H196.

Belongs to the LpxH family. Mn(2+) is required as a cofactor.

It is found in the cell inner membrane. The enzyme catalyses UDP-2-N,3-O-bis[(3R)-3-hydroxytetradecanoyl]-alpha-D-glucosamine + H2O = 2-N,3-O-bis[(3R)-3-hydroxytetradecanoyl]-alpha-D-glucosaminyl 1-phosphate + UMP + 2 H(+). Its pathway is glycolipid biosynthesis; lipid IV(A) biosynthesis; lipid IV(A) from (3R)-3-hydroxytetradecanoyl-[acyl-carrier-protein] and UDP-N-acetyl-alpha-D-glucosamine: step 4/6. Functionally, hydrolyzes the pyrophosphate bond of UDP-2,3-diacylglucosamine to yield 2,3-diacylglucosamine 1-phosphate (lipid X) and UMP by catalyzing the attack of water at the alpha-P atom. Involved in the biosynthesis of lipid A, a phosphorylated glycolipid that anchors the lipopolysaccharide to the outer membrane of the cell. This is UDP-2,3-diacylglucosamine hydrolase from Shewanella baltica (strain OS185).